The sequence spans 196 residues: Putative 3-methyladenine DNA glycosylase (196 aa).

It belongs to the DNA glycosylase MPG family.

The polypeptide is Putative 3-methyladenine DNA glycosylase (Bacillus velezensis (strain DSM 23117 / BGSC 10A6 / LMG 26770 / FZB42) (Bacillus amyloliquefaciens subsp. plantarum)).